The sequence spans 308 residues: Ribosomal RNA small subunit methyltransferase H (308 aa).

Residues 36–38 (GGH), aspartate 55, phenylalanine 82, aspartate 103, and glutamine 110 contribute to the S-adenosyl-L-methionine site.

The protein belongs to the methyltransferase superfamily. RsmH family.

The protein resides in the cytoplasm. It carries out the reaction cytidine(1402) in 16S rRNA + S-adenosyl-L-methionine = N(4)-methylcytidine(1402) in 16S rRNA + S-adenosyl-L-homocysteine + H(+). Specifically methylates the N4 position of cytidine in position 1402 (C1402) of 16S rRNA. The chain is Ribosomal RNA small subunit methyltransferase H from Helicobacter pylori (strain ATCC 700392 / 26695) (Campylobacter pylori).